The sequence spans 297 residues: GTPase Era (297 aa).

One can recognise an Era-type G domain in the interval 3 to 171; it reads KSGFVSIVGR…IKVIQNYLEE (169 aa). The interval 11–18 is G1; it reads GRPNVGKS. 11-18 provides a ligand contact to GTP; that stretch reads GRPNVGKS. The tract at residues 37–41 is G2; the sequence is QTTRN. The G3 stretch occupies residues 58–61; it reads DTPG. Residues 58 to 62 and 120 to 123 contribute to the GTP site; these read DTPGI and NKID. Residues 120-123 form a G4 region; that stretch reads NKID. Positions 150-152 are G5; sequence ISA. In terms of domain architecture, KH type-2 spans 194–280; that stretch reads IREKVLHYLN…NLQLWVKVKE (87 aa).

The protein belongs to the TRAFAC class TrmE-Era-EngA-EngB-Septin-like GTPase superfamily. Era GTPase family. As to quaternary structure, monomer.

The protein localises to the cytoplasm. Its subcellular location is the cell membrane. In terms of biological role, an essential GTPase that binds both GDP and GTP, with rapid nucleotide exchange. Plays a role in 16S rRNA processing and 30S ribosomal subunit biogenesis and possibly also in cell cycle regulation and energy metabolism. In Clostridioides difficile (strain 630) (Peptoclostridium difficile), this protein is GTPase Era.